The sequence spans 300 residues: N-acetylmuramic acid 6-phosphate etherase 1 (300 aa).

The 164-residue stretch at 57–220 folds into the SIS domain; the sequence is IATAFAQGGR…TTGAMIKSGK (164 aa). The active-site Proton donor is the Glu85. Glu116 is an active-site residue.

Belongs to the GCKR-like family. MurNAc-6-P etherase subfamily. In terms of assembly, homodimer.

The enzyme catalyses N-acetyl-D-muramate 6-phosphate + H2O = N-acetyl-D-glucosamine 6-phosphate + (R)-lactate. The protein operates within amino-sugar metabolism; 1,6-anhydro-N-acetylmuramate degradation. It participates in amino-sugar metabolism; N-acetylmuramate degradation. Its pathway is cell wall biogenesis; peptidoglycan recycling. Its function is as follows. Specifically catalyzes the cleavage of the D-lactyl ether substituent of MurNAc 6-phosphate, producing GlcNAc 6-phosphate and D-lactate. Together with AnmK, is also required for the utilization of anhydro-N-acetylmuramic acid (anhMurNAc) either imported from the medium or derived from its own cell wall murein, and thus plays a role in cell wall recycling. This is N-acetylmuramic acid 6-phosphate etherase 1 from Vibrio cholerae serotype O1 (strain ATCC 39315 / El Tor Inaba N16961).